A 354-amino-acid chain; its full sequence is Protein Wnt-8a (354 aa).

The signal sequence occupies residues 1–19 (MGHLLMLWVAAGMCYPALG). A disulfide bridge links Cys54 with Cys65. Asn103 is a glycosylation site (N-linked (GlcNAc...) asparagine). Intrachain disulfides connect Cys104-Cys112, Cys114-Cys132, Cys180-Cys194, Cys182-Cys189, Cys259-Cys297, Cys275-Cys290, Cys294-Cys336, Cys312-Cys327, Cys314-Cys324, and Cys319-Cys320. Ser186 carries O-palmitoleoyl serine lipidation. N-linked (GlcNAc...) asparagine glycosylation is present at Asn262.

Belongs to the Wnt family. Forms a soluble 1:1 complex with AFM; this prevents oligomerization and is required for prolonged biological activity. The complex with AFM may represent the physiological form in body fluids. In terms of processing, palmitoleoylation is required for efficient binding to frizzled receptors. Depalmitoleoylation leads to Wnt signaling pathway inhibition. Proteolytic processing by TIKI1 and TIKI2 promotes oxidation and formation of large disulfide-bond oligomers, leading to inactivation of WNT8A.

The protein resides in the secreted. The protein localises to the extracellular space. Its subcellular location is the extracellular matrix. Its function is as follows. Ligand for members of the frizzled family of seven transmembrane receptors. Plays a role in embryonic patterning. The chain is Protein Wnt-8a (Wnt8a) from Mus musculus (Mouse).